Consider the following 541-residue polypeptide: Probable inorganic phosphate transporter 1-12 (541 aa).

Residues 1–26 (MGRQDQQLQVLNALDAAKTQWYHFTA) are Cytoplasmic-facing. The chain crosses the membrane as a helical span at residues 27 to 47 (IIVAGMGFFTDAYDLFCISLV). The Extracellular portion of the chain corresponds to 48-70 (TKLLGRIYYTDPASPTPGSLPPN). A helical membrane pass occupies residues 71–91 (IAAAVNGVALCGTLSGQLFFG). Over 92–100 (WLGDKLGRK) the chain is Cytoplasmic. Residues 101–121 (SVYGMTLLLMVICSIASGLSF) traverse the membrane as a helical segment. The Extracellular segment spans residues 122–124 (SHT). Residues 125 to 145 (PTSVMATLCFFRFWLGFGIGG) form a helical membrane-spanning segment. Topologically, residues 146–163 (DYPLSATIMSEYANKKTR) are cytoplasmic. A helical transmembrane segment spans residues 164–184 (GAFIAAVFAMQGFGILAGGVV). Residues 185–213 (TLAMSAGFQAAFPAPAYEVNAAASTVPQA) lie on the Extracellular side of the membrane. Residues 214 to 234 (DYVWRIILMLGALPAILTYYW) traverse the membrane as a helical segment. Over 235–297 (RMKMPETARY…ARFAKRHGAH (63 aa)) the chain is Cytoplasmic. A helical transmembrane segment spans residues 298–318 (LLGTAATWFLVDVAYYSQNLF). Residues 319–349 (QKDIFTSIHWIPKARTMSELEEVFRISRAQT) are Extracellular-facing. A helical transmembrane segment spans residues 350-370 (LIALCGTVPGYWFTVFLIDII). Topologically, residues 371–374 (GRFK) are cytoplasmic. Residues 375-395 (IQLLGFAGMTAFMLGLAIPYH) form a helical membrane-spanning segment. At 396 to 403 (HWTMPGNQ) the chain is on the extracellular side. Residues 404–424 (VIFVFLYGFTFFFANFGPNAT) form a helical membrane-spanning segment. Residues 425 to 443 (TFIVPAEIFPARLRSTCHG) lie on the Cytoplasmic side of the membrane. The chain crosses the membrane as a helical span at residues 444–464 (ISAASGKAGAIIGAFGFLYAA). Residues 465 to 484 (QPQDKAHVDAGYKPGIGVRN) lie on the Extracellular side of the membrane. A helical membrane pass occupies residues 485–505 (ALFVLAGCNLVGFLMTWMLVP). The Cytoplasmic portion of the chain corresponds to 506–541 (ESKGKSLEEMSGEADDEEASANGGATAVNSSGVEMV). A disordered region spans residues 512–541 (LEEMSGEADDEEASANGGATAVNSSGVEMV). Acidic residues predominate over residues 515–524 (MSGEADDEEA). Residues 532 to 541 (AVNSSGVEMV) show a composition bias toward polar residues.

Belongs to the major facilitator superfamily. Phosphate:H(+) symporter (TC 2.A.1.9) family.

The protein localises to the membrane. Its function is as follows. High-affinity transporter for external inorganic phosphate. The polypeptide is Probable inorganic phosphate transporter 1-12 (PHT1-12) (Oryza sativa subsp. japonica (Rice)).